We begin with the raw amino-acid sequence, 591 residues long: Putative F-box protein At1g32140 (591 aa).

Residues 2-49 (TMMSDLSLDLVEEILCRVPITSLKAVRSSCKLWNVLSKNRILCKTEAR) enclose the F-box domain. Basic residues predominate over residues 567–581 (AGRKRKEKKTKRKSK). The interval 567-591 (AGRKRKEKKTKRKSKDKQMKLSNKV) is disordered.

The chain is Putative F-box protein At1g32140 from Arabidopsis thaliana (Mouse-ear cress).